Consider the following 316-residue polypeptide: Acetaldehyde dehydrogenase (316 aa).

Residue 11-14 (SGNI) participates in NAD(+) binding. Cysteine 131 serves as the catalytic Acyl-thioester intermediate. NAD(+)-binding positions include 162–170 (SAGPGTRAN) and asparagine 289.

It belongs to the acetaldehyde dehydrogenase family. In terms of assembly, interacts with MhpE.

It carries out the reaction acetaldehyde + NAD(+) + CoA = acetyl-CoA + NADH + H(+). It functions in the pathway aromatic compound metabolism; 3-phenylpropanoate degradation. Functionally, catalyzes the conversion of acetaldehyde to acetyl-CoA, using NAD(+) and coenzyme A. Is the final enzyme in the meta-cleavage pathway for the degradation of aromatic compounds. In Klebsiella pneumoniae subsp. pneumoniae (strain ATCC 700721 / MGH 78578), this protein is Acetaldehyde dehydrogenase.